Consider the following 471-residue polypeptide: Variant surface glycoprotein ILTAT 1.21 (471 aa).

Residues 1–21 (MLRALLPSTTLALILAGGGHA) form the signal peptide. N-linked (GlcNAc...) asparagine glycosylation is found at N64 and N405. The interval 406–449 (ATADECPETRCEYDSEKNECRPKKGTETTATGPGERTTPADGKA) is disordered. Basic and acidic residues predominate over residues 412 to 431 (PETRCEYDSEKNECRPKKGT). Residue N450 is glycosylated (N-linked (GlcNAc...) asparagine). The GPI-anchor amidated serine moiety is linked to residue S454. Positions 455–471 (DSLLIKTSPLWLAFLLF) are cleaved as a propeptide — removed in mature form.

The protein resides in the cell membrane. VSG forms a coat on the surface of the parasite. The trypanosome evades the immune response of the host by expressing a series of antigenically distinct VSGs from an estimated 1000 VSG genes. The sequence is that of Variant surface glycoprotein ILTAT 1.21 from Trypanosoma brucei brucei.